Reading from the N-terminus, the 436-residue chain is Hydroxycinnamoyltransferase (436 aa).

Active-site proton acceptor residues include His154 and Asp383.

This sequence belongs to the plant acyltransferase family. Mostly expressed in stems, and, to a lower extent, in bulbs.

The protein operates within phenylpropanoid metabolism. Functionally, hydroxycinnamoyl transferase that catalyzes the transfer of an acyl from p-coumaryol-CoA to various acyl acceptors. Can use feruloyl-CoA and caffeoyl-CoA as acyl donors. The sequence is that of Hydroxycinnamoyltransferase from Narcissus pseudonarcissus (Daffodil).